Here is a 475-residue protein sequence, read N- to C-terminus: Ribulose bisphosphate carboxylase large chain (475 aa).

The propeptide occupies 1-2 (MS). Proline 3 is subject to N-acetylproline. At lysine 14 the chain carries N6,N6,N6-trimethyllysine. Substrate is bound by residues asparagine 123 and threonine 173. The active-site Proton acceptor is lysine 175. Lysine 177 contacts substrate. Residues lysine 201, aspartate 203, and glutamate 204 each contribute to the Mg(2+) site. Lysine 201 carries the N6-carboxylysine modification. Catalysis depends on histidine 294, which acts as the Proton acceptor. Substrate contacts are provided by arginine 295, histidine 327, and serine 379.

It belongs to the RuBisCO large chain family. Type I subfamily. Heterohexadecamer of 8 large chains and 8 small chains; disulfide-linked. The disulfide link is formed within the large subunit homodimers. The cofactor is Mg(2+). The disulfide bond which can form in the large chain dimeric partners within the hexadecamer appears to be associated with oxidative stress and protein turnover.

The protein localises to the plastid. It is found in the chloroplast. The enzyme catalyses 2 (2R)-3-phosphoglycerate + 2 H(+) = D-ribulose 1,5-bisphosphate + CO2 + H2O. It carries out the reaction D-ribulose 1,5-bisphosphate + O2 = 2-phosphoglycolate + (2R)-3-phosphoglycerate + 2 H(+). In terms of biological role, ruBisCO catalyzes two reactions: the carboxylation of D-ribulose 1,5-bisphosphate, the primary event in carbon dioxide fixation, as well as the oxidative fragmentation of the pentose substrate in the photorespiration process. Both reactions occur simultaneously and in competition at the same active site. This Angiopteris evecta (Mule's foot fern) protein is Ribulose bisphosphate carboxylase large chain.